A 209-amino-acid chain; its full sequence is Putative NAD(P)H nitroreductase YdgI (209 aa).

Residues 14 to 16 (RRS), 72 to 74 (QTQ), 161 to 162 (GG), and Arg-199 each bind FMN.

This sequence belongs to the nitroreductase family. FMN serves as cofactor.

This chain is Putative NAD(P)H nitroreductase YdgI (ydgI), found in Bacillus subtilis (strain 168).